The sequence spans 254 residues: Splicing factor tls1 (254 aa).

Positions 69–83 are enriched in basic and acidic residues; sequence KEKQLNTANEPHEAN. Disordered stretches follow at residues 69-90 and 195-216; these read KEKQ…SAQS and RKRQ…LRTS. Over residues 195–204 the composition is skewed to basic residues; sequence RKRQKKRARM. Basic and acidic residues predominate over residues 205–216; the sequence is KEKLDSKALRTS.

This sequence belongs to the TLS1 family. Component of the spliceosome. Interacts with brr2.

The protein localises to the cytoplasm. Its subcellular location is the nucleus. Plays a role in pre-mRNA splicing by facilitating excision of introns featuring long spacing between the branchpoint and 3'-splice site. Assists the splicing of several components involved in chromatin organization, such as several shelterin complex subunits. The protein is Splicing factor tls1 of Schizosaccharomyces pombe (strain 972 / ATCC 24843) (Fission yeast).